Reading from the N-terminus, the 749-residue chain is Phototropin (749 aa).

The 74-residue stretch at 7–80 (PASQLTKVLA…QKIRDAIKKG (74 aa)) folds into the PAS 1 domain. FMN is bound by residues 56–61 (NCRFLQ), Arg74, Asn89, Asn99, and Gln120. Position 57 is an S-4a-FMN cysteine (Cys57). Residues 81-135 (EACSVRLLNYRKDGTPFWNLLTVTPIKTPDGRVSKFVGVQVDVTSKTEGKALADN) form the PAC 1 domain. The PAS 2 domain occupies 200–273 (VALDLATTVE…DQIRAAIKEG (74 aa)). The PAC 2 domain occupies 274–328 (SELTVRILNYTKAGKAFWNMFTLAPMRDQDGHARFFVGVQVDVTAQSTSPDKAPV). Residues 404-712 (FRRVKQLGAG…ANEIKSHPWF (309 aa)) enclose the Protein kinase domain. Residues 410 to 418 (LGAGDVGLV) and Lys433 each bind ATP. Asp529 serves as the catalytic Proton acceptor. 2 disordered regions span residues 563–591 (KIGG…SSSG) and 729–749 (PRRA…FDNY). In terms of domain architecture, AGC-kinase C-terminal spans 713–749 (KGINWALLRHQQPPYVPRRASKAAGGSSTGGAAFDNY). Over residues 734 to 749 (KAAGGSSTGGAAFDNY) the composition is skewed to low complexity.

Belongs to the protein kinase superfamily. AGC Ser/Thr protein kinase family. It depends on FMN as a cofactor. Autophosphorylated in response to blue light irradiation. In terms of processing, 2 molecules of FMN bind covalently to cysteines after exposure to blue light and are reversed in the dark. Expressed in gametes, pre-gametes and gametes generated by pre-gametes (at protein level).

It localises to the membrane. It catalyses the reaction L-seryl-[protein] + ATP = O-phospho-L-seryl-[protein] + ADP + H(+). The enzyme catalyses L-threonyl-[protein] + ATP = O-phospho-L-threonyl-[protein] + ADP + H(+). Functionally, protein kinase that acts as a blue light photoreceptor. Required for non-photochemical quenching (NPQ), a mechanism that converts and dissipates the harmful excess absorbed light energy into heat and protect the photosynthetic apparatus from photo-oxidative damage. Controls the energy-dependent chlorophyll fluorescence quenching (qE) activity of chlorophyll excited states by inducing the expression of the qE effector protein LHCSR3 in high light intensities. In Chlamydomonas reinhardtii (Chlamydomonas smithii), this protein is Phototropin.